The following is a 190-amino-acid chain: Inosine triphosphate pyrophosphatase (190 aa).

An ITP-binding site is contributed by 9–14 (TGNAKK). Glu-39 serves as a coordination point for Mg(2+). Residues Lys-51, 67 to 68 (DT), Lys-84, 144 to 147 (FGWD), Lys-167, and 172 to 173 (HR) contribute to the ITP site.

It belongs to the HAM1 NTPase family. Homodimer. Mg(2+) serves as cofactor. The cofactor is Mn(2+).

Its subcellular location is the cytoplasm. The catalysed reaction is ITP + H2O = IMP + diphosphate + H(+). It catalyses the reaction dITP + H2O = dIMP + diphosphate + H(+). The enzyme catalyses XTP + H2O = XMP + diphosphate + H(+). Its function is as follows. Pyrophosphatase that hydrolyzes non-canonical purine nucleotides such as inosine triphosphate (ITP), deoxyinosine triphosphate (dITP) or xanthosine 5'-triphosphate (XTP) to their respective monophosphate derivatives. The enzyme does not distinguish between the deoxy- and ribose forms. Probably excludes non-canonical purines from RNA and DNA precursor pools, thus preventing their incorporation into RNA and DNA and avoiding chromosomal lesions. This is Inosine triphosphate pyrophosphatase from Pediculus humanus subsp. corporis (Body louse).